We begin with the raw amino-acid sequence, 111 residues long: Small ribosomal subunit protein uS17 (111 aa).

Belongs to the universal ribosomal protein uS17 family. In terms of assembly, part of the 30S ribosomal subunit.

Functionally, one of the primary rRNA binding proteins, it binds specifically to the 5'-end of 16S ribosomal RNA. The protein is Small ribosomal subunit protein uS17 of Archaeoglobus fulgidus (strain ATCC 49558 / DSM 4304 / JCM 9628 / NBRC 100126 / VC-16).